A 275-amino-acid chain; its full sequence is Large ribosomal subunit protein uL2c (275 aa).

The interval 219–267 is disordered; the sequence is TVRGSVMNPCDHPHGGGEGRTPIGRTRPLTPWGKPALGKKTRKTKKLSS. The segment covering 255–264 has biased composition (basic residues); it reads LGKKTRKTKK.

This sequence belongs to the universal ribosomal protein uL2 family. As to quaternary structure, part of the 50S ribosomal subunit.

The protein resides in the plastid. Its subcellular location is the chloroplast. In Thalassiosira pseudonana (Marine diatom), this protein is Large ribosomal subunit protein uL2c (rpl2).